The primary structure comprises 607 residues: T-box transcription factor TBX18 (607 aa).

The Engrailed homology 1 repressor signature appears at 18-28 (HAFSVEALIGA). Positions 30 to 141 (KQQQLQKKRR…PLPSPQAPRV (112 aa)) are disordered. The Nuclear localization signal signature appears at 36–40 (KKRRK). The span at 44–53 (EEAAGAVDDG) shows a compositional bias: low complexity. A DNA-binding region (T-box) is located at residues 143–330 (LQGAELWKRF…RNPFAKGFRD (188 aa)).

In terms of assembly, homodimer. Can form a heterodimer with TBX15. Interacts with GATA4 and NKX2-5. Interacts with PAX3. Interacts (via engrailed homology 1 repressor motif) with TLE3; this interaction represses TBX18 transcriptional activity. Interacts with SIX1.

It is found in the nucleus. Acts as a transcriptional repressor involved in developmental processes of a variety of tissues and organs, including the heart and coronary vessels, the ureter and the vertebral column. Required for embryonic development of the sino atrial node (SAN) head area. This is T-box transcription factor TBX18 (TBX18) from Homo sapiens (Human).